A 76-amino-acid polypeptide reads, in one-letter code: MGLKMSCLKGFQMCVSSSSSSHDEAPVLNDKHLDVPDIIITPPTPTGMMLPRDLGSTVWLDETGSCPDDGEIDPEA.

The required for interaction with PPP3CA stretch occupies residues Pro-36–Thr-41. Phosphothreonine is present on residues Thr-44 and Thr-46.

Interacts (via PxIxIT motif, when phosphorylated on Thr-44) with PPP3CA. In terms of tissue distribution, not expressed in pancreatic duct cells (at protein level). Abundantly expressed in the pancreas and weakly expressed in the thyroid. Not expressed in pancreatic duct cells (at protein level). Abundantly expressed in the lymph node and weakly expressed in the stomach, trachea and bone marrow.

This is an uncharacterized protein from Homo sapiens (Human).